Here is a 481-residue protein sequence, read N- to C-terminus: Beta-1,3-glucan-binding protein (481 aa).

The N-terminal stretch at 1–18 (RCARVCAVLFLFIQISYG) is a signal peptide. The CBM39 domain occupies 20–120 (YQVPQVTVQA…LSFTVSALED (101 aa)). N110 is a glycosylation site (N-linked (GlcNAc...) asparagine). The GH16 domain maps to 124–481 (TGTGTDPVPT…LVDYVKVVAL (358 aa)).

The protein belongs to the insect beta-1,3-glucan binding protein family.

It localises to the secreted. Functionally, involved in the recognition of invading microorganisms. Binds specifically to beta-1,3-glucan and activates the phenoloxidase cascade. In Hyphantria cunea (Fall webworm moth), this protein is Beta-1,3-glucan-binding protein.